The primary structure comprises 534 residues: Probable glycine dehydrogenase (decarboxylating) subunit 2 (534 aa).

K273 carries the post-translational modification N6-(pyridoxal phosphate)lysine.

It belongs to the GcvP family. C-terminal subunit subfamily. The glycine cleavage system is composed of four proteins: P, T, L and H. In this organism, the P 'protein' is a heterodimer of two subunits. It depends on pyridoxal 5'-phosphate as a cofactor.

It carries out the reaction N(6)-[(R)-lipoyl]-L-lysyl-[glycine-cleavage complex H protein] + glycine + H(+) = N(6)-[(R)-S(8)-aminomethyldihydrolipoyl]-L-lysyl-[glycine-cleavage complex H protein] + CO2. Its function is as follows. The glycine cleavage system catalyzes the degradation of glycine. The P protein binds the alpha-amino group of glycine through its pyridoxal phosphate cofactor; CO(2) is released and the remaining methylamine moiety is then transferred to the lipoamide cofactor of the H protein. This is Probable glycine dehydrogenase (decarboxylating) subunit 2 from Bacillus cereus (strain ATCC 14579 / DSM 31 / CCUG 7414 / JCM 2152 / NBRC 15305 / NCIMB 9373 / NCTC 2599 / NRRL B-3711).